The sequence spans 356 residues: Glutamine synthetase nodule isozyme (356 aa).

The region spanning 19-99 (IIAEYIWIGG…VMCDAYTPAG (81 aa)) is the GS beta-grasp domain. The interval 41–66 (PGPVSDPSKLPKWNYDGSSTGQAPGE) is disordered. The 251-residue stretch at 106–356 (KRHNAAKIFS…IADTTILWKP (251 aa)) folds into the GS catalytic domain.

Belongs to the glutamine synthetase family. In terms of assembly, homooctamer.

The protein resides in the cytoplasm. It catalyses the reaction L-glutamate + NH4(+) + ATP = L-glutamine + ADP + phosphate + H(+). In Vigna aconitifolia (Moth bean), this protein is Glutamine synthetase nodule isozyme.